A 257-amino-acid polypeptide reads, in one-letter code: Thioredoxin-dependent peroxide reductase, mitochondrial (257 aa).

Residues 1 to 62 (MAAAAGRLLW…SAFSTSSSFH (62 aa)) constitute a mitochondrion transit peptide. One can recognise a Thioredoxin domain in the interval 64–222 (PAVTQHAPYF…TLRLVKAFQF (159 aa)). N6-succinyllysine is present on Lys-84. Lys-92 carries the N6-acetyllysine; alternate modification. Lys-92 bears the N6-succinyllysine; alternate mark. Cys-109 functions as the Cysteine sulfenic acid (-SOH) intermediate in the catalytic mechanism. At Thr-147 the chain carries Phosphothreonine.

This sequence belongs to the peroxiredoxin family. AhpC/Prx1 subfamily. As to quaternary structure, homodimer; disulfide-linked, upon oxidation. 6 homodimers assemble to form a ring-like dodecamer. Interacts with NEK6. Interacts with LRRK2. Interacts with MAP3K13. Interacts with RPS6KC1 (via PX domain). In terms of processing, phosphorylated by LRRK2; phosphorylation reduces perodixase activity. Post-translationally, the enzyme can be inactivated by further oxidation of the cysteine sulfenic acid (C(P)-SOH) to sulphinic acid (C(P)-SO2H) and sulphonic acid (C(P)-SO3H) instead of its condensation to a disulfide bond. S-palmitoylated. Housekeeping-type gene preferentially expressed in murine erythroleukemia (MEL) cells.

Its subcellular location is the mitochondrion. The protein resides in the cytoplasm. It localises to the early endosome. The catalysed reaction is a hydroperoxide + [thioredoxin]-dithiol = an alcohol + [thioredoxin]-disulfide + H2O. Thiol-specific peroxidase that catalyzes the reduction of hydrogen peroxide and organic hydroperoxides to water and alcohols, respectively. Plays a role in cell protection against oxidative stress by detoxifying peroxides. Acts synergistically with MAP3K13 to regulate the activation of NF-kappa-B in the cytosol. Required for the maintenance of physical strength. In Mus musculus (Mouse), this protein is Thioredoxin-dependent peroxide reductase, mitochondrial (Prdx3).